The primary structure comprises 509 residues: tRNA-2-methylthio-N(6)-dimethylallyladenosine synthase (509 aa).

Residues 1 to 15 (MNEQQRLASRQANSS) are compositionally biased toward polar residues. Residues 1-25 (MNEQQRLASRQANSSTKKEEKDYSK) form a disordered region. A compositionally biased stretch (basic and acidic residues) spans 16-25 (TKKEEKDYSK). Residues 66-184 (RKFYIRTYGC…LPYILKDAMF (119 aa)) form the MTTase N-terminal domain. Positions 75, 111, 145, 221, 225, and 228 each coordinate [4Fe-4S] cluster. Residues 207 to 437 (RRGDIKAWVN…NTLVNEYGVN (231 aa)) enclose the Radical SAM core domain. One can recognise a TRAM domain in the interval 440 to 503 (KRYIGQIVEV…TWSLNGELVK (64 aa)).

The protein belongs to the methylthiotransferase family. MiaB subfamily. As to quaternary structure, monomer. The cofactor is [4Fe-4S] cluster.

It localises to the cytoplasm. The catalysed reaction is N(6)-dimethylallyladenosine(37) in tRNA + (sulfur carrier)-SH + AH2 + 2 S-adenosyl-L-methionine = 2-methylsulfanyl-N(6)-dimethylallyladenosine(37) in tRNA + (sulfur carrier)-H + 5'-deoxyadenosine + L-methionine + A + S-adenosyl-L-homocysteine + 2 H(+). Its function is as follows. Catalyzes the methylthiolation of N6-(dimethylallyl)adenosine (i(6)A), leading to the formation of 2-methylthio-N6-(dimethylallyl)adenosine (ms(2)i(6)A) at position 37 in tRNAs that read codons beginning with uridine. The polypeptide is tRNA-2-methylthio-N(6)-dimethylallyladenosine synthase (Bacillus mycoides (strain KBAB4) (Bacillus weihenstephanensis)).